The following is a 199-amino-acid chain: Ribonuclease HII (199 aa).

The region spanning 10-199 (HLVAGVDEVG…VKRALGLASN (190 aa)) is the RNase H type-2 domain. 3 residues coordinate a divalent metal cation: aspartate 16, glutamate 17, and aspartate 108.

It belongs to the RNase HII family. The cofactor is Mn(2+). It depends on Mg(2+) as a cofactor.

It localises to the cytoplasm. It carries out the reaction Endonucleolytic cleavage to 5'-phosphomonoester.. Functionally, endonuclease that specifically degrades the RNA of RNA-DNA hybrids. This is Ribonuclease HII from Klebsiella pneumoniae subsp. pneumoniae (strain ATCC 700721 / MGH 78578).